The following is a 298-amino-acid chain: Cyclin-D4-2 (298 aa).

It belongs to the cyclin family. Cyclin D subfamily. Interacts with CDKA-1 to form a kinase complex.

May promote cell division. This is Cyclin-D4-2 (CYCD4-2) from Arabidopsis thaliana (Mouse-ear cress).